The chain runs to 279 residues: MKLCVALDLSTKEECLQLAKELKNLDIWLKVGLRAYLRDGFKFIEELKKVDDFKIFLDLKIHDIPNTMADACEEVSKLGVDMINIHASAGKIAIQEVMTRLSKFSKRPLVLAVSALTSFDEENFFSIYRQKIEEAVINFSKISYENGLDGMVCSVFESKKIKEHTSSNFLTLTPGIRPFGETSDDQKRVANLAMARENLSDYIVVGRPIYKNENPRAVCEKILNKIHRKNISENDIEQNYEVIQQKEWDMCNHFEEWIKTQPDKEHALKEFYAKCGIKY.

Substrate is bound by residues Asp-8, Lys-30, 58 to 67, Thr-117, Arg-177, Gln-186, Gly-206, and Arg-207; that span reads DLKIHDIPNT. Lys-60 serves as the catalytic Proton donor.

This sequence belongs to the OMP decarboxylase family. Type 1 subfamily. In terms of assembly, homodimer.

The enzyme catalyses orotidine 5'-phosphate + H(+) = UMP + CO2. It participates in pyrimidine metabolism; UMP biosynthesis via de novo pathway; UMP from orotate: step 2/2. Catalyzes the decarboxylation of orotidine 5'-monophosphate (OMP) to uridine 5'-monophosphate (UMP). The sequence is that of Orotidine 5'-phosphate decarboxylase from Campylobacter jejuni (strain RM1221).